Reading from the N-terminus, the 1024-residue chain is Beta-galactosidase (1024 aa).

Asn-103 and Asp-202 together coordinate substrate. Na(+) is bound at residue Asp-202. Mg(2+) contacts are provided by Glu-417, His-419, and Glu-462. Residues Glu-462 and 538-541 each bind substrate; that span reads EYAH. Catalysis depends on Glu-462, which acts as the Proton donor. Residue Glu-538 is the Nucleophile of the active site. Mg(2+) is bound at residue Asn-598. Residues Phe-602 and Asn-605 each contribute to the Na(+) site. Residues Asn-605 and Trp-1000 each contribute to the substrate site.

This sequence belongs to the glycosyl hydrolase 2 family. In terms of assembly, homotetramer. Requires Mg(2+) as cofactor. Mn(2+) is required as a cofactor. It depends on Na(+) as a cofactor.

The catalysed reaction is Hydrolysis of terminal non-reducing beta-D-galactose residues in beta-D-galactosides.. With respect to regulation, inhibited by phenylethyl thio-beta-D-galactoside (PETG), isopropyl thio-beta-D-galactoside (IPTG), L-ribose, D-galactonolactone, lactose and 2-amino-D-galactose. This is Beta-galactosidase (lacZ) from Escherichia coli (strain K12).